The primary structure comprises 113 residues: Mitochondrial import inner membrane translocase subunit tim16 (113 aa).

Residues 56–108 (KILGLENVETVSKEDIDKKYNELLTINDPKDGGSEYLQIKISGAKHCLHSALK) are J-like.

Belongs to the TIM16/PAM16 family. Probable component of the PAM complex at least composed of a mitochondrial HSP70 protein, grepE, tim16 and tim14. Associates with the TIM23 complex.

The protein localises to the mitochondrion inner membrane. Its function is as follows. Regulates ATP-dependent protein translocation into the mitochondrial matrix. The sequence is that of Mitochondrial import inner membrane translocase subunit tim16 (timm16) from Dictyostelium discoideum (Social amoeba).